The following is a 120-amino-acid chain: NAD(P)H-quinone oxidoreductase subunit 3 (120 aa).

3 helical membrane-spanning segments follow: residues 10-32 (LLGFLLLCSLVPALALSASKVLR), 64-84 (MFALVFVIFDVETVFLYPWAV), and 89-109 (LGVLAFIEALIFIAILIVGLV).

Belongs to the complex I subunit 3 family. In terms of assembly, NDH-1 can be composed of about 15 different subunits; different subcomplexes with different compositions have been identified which probably have different functions.

The protein resides in the cellular thylakoid membrane. It catalyses the reaction a plastoquinone + NADH + (n+1) H(+)(in) = a plastoquinol + NAD(+) + n H(+)(out). It carries out the reaction a plastoquinone + NADPH + (n+1) H(+)(in) = a plastoquinol + NADP(+) + n H(+)(out). Its function is as follows. NDH-1 shuttles electrons from an unknown electron donor, via FMN and iron-sulfur (Fe-S) centers, to quinones in the respiratory and/or the photosynthetic chain. The immediate electron acceptor for the enzyme in this species is believed to be plastoquinone. Couples the redox reaction to proton translocation, and thus conserves the redox energy in a proton gradient. Cyanobacterial NDH-1 also plays a role in inorganic carbon-concentration. In Acaryochloris marina (strain MBIC 11017), this protein is NAD(P)H-quinone oxidoreductase subunit 3.